Here is a 2701-residue protein sequence, read N- to C-terminus: Centromere-associated protein E (2701 aa).

The Kinesin motor domain occupies Ala-6–Met-329. ATP is bound at residue Gly-86 to Thr-93. Positions Asn-336–Arg-2590 form a coiled coil. Phosphoserine occurs at positions 611 and 2083. The tract at residues Lys-2126 to Lys-2476 is kinetochore-binding domain. The disordered stretch occupies residues Ser-2355–Thr-2376. Residue Ser-2389 is modified to Phosphoserine. Residues Gln-2508 to Pro-2527 are compositionally biased toward polar residues. Disordered stretches follow at residues Gln-2508–Gly-2533 and Lys-2588–Gln-2701. A globular autoinhibitory domain region spans residues Gln-2510 to Cys-2698. Residues Lys-2588–Val-2600 are compositionally biased toward basic and acidic residues. The span at Thr-2601–Gln-2625 shows a compositional bias: polar residues. Basic and acidic residues predominate over residues Cys-2626–Pro-2640. Residues Ser-2639, Ser-2647, and Ser-2651 each carry the phosphoserine modification. Cysteine methyl ester is present on Cys-2698. Cys-2698 is lipidated: S-farnesyl cysteine. The propeptide at Lys-2699–Gln-2701 is removed in mature form.

Belongs to the TRAFAC class myosin-kinesin ATPase superfamily. Kinesin family. Monomer. Interacts with CENPF. Interacts with BUB1B. Interacts with SEPT7. Interacts with KIF18A. Interacts with PRC1. Interacts with NUF2; this interaction determines kinetochore localization. Interacts with SKAP; this interaction greatly favors SKAP binding to microtubules. Interacts with TRAPPC12. Interacts with CTCF. In terms of processing, the C-terminal inhibitory domain is phosphorylated. Phosphorylation relieves autoinhibition of the kinetochore motor. Post-translationally, sumoylated with SUMO2 and SUMO3. The sumoylation mediates the association to the kinetochore.

The protein localises to the chromosome. The protein resides in the centromere. Its subcellular location is the kinetochore. It localises to the cytoplasm. It is found in the cytoskeleton. The protein localises to the spindle. Its function is as follows. Microtubule plus-end-directed kinetochore motor which plays an important role in chromosome congression, microtubule-kinetochore conjugation and spindle assembly checkpoint activation. Drives chromosome congression (alignment of chromosomes at the spindle equator resulting in the formation of the metaphase plate) by mediating the lateral sliding of polar chromosomes along spindle microtubules towards the spindle equator and by aiding the establishment and maintenance of connections between kinetochores and spindle microtubules. The transport of pole-proximal chromosomes towards the spindle equator is favored by microtubule tracks that are detyrosinated. Acts as a processive bi-directional tracker of dynamic microtubule tips; after chromosomes have congressed, continues to play an active role at kinetochores, enhancing their links with dynamic microtubule ends. Suppresses chromosome congression in NDC80-depleted cells and contributes positively to congression only when microtubules are stabilized. Plays an important role in the formation of stable attachments between kinetochores and spindle microtubules The stabilization of kinetochore-microtubule attachment also requires CENPE-dependent localization of other proteins to the kinetochore including BUB1B, MAD1 and MAD2. Plays a role in spindle assembly checkpoint activation (SAC) via its interaction with BUB1B resulting in the activation of its kinase activity, which is important for activating SAC. Necessary for the mitotic checkpoint signal at individual kinetochores to prevent aneuploidy due to single chromosome loss. This chain is Centromere-associated protein E (CENPE), found in Homo sapiens (Human).